The following is a 390-amino-acid chain: Putative methylesterase 11, chloroplastic (390 aa).

A chloroplast-targeting transit peptide spans 1 to 46 (MGNLCSLFTPPKPVKKRKPITKRQSSIGASSSGSGLNSNRWNNRVR). Disordered stretches follow at residues 1-52 (MGNL…SSRR) and 94-119 (QGSC…DPLL). Positions 25–48 (SSIGASSSGSGLNSNRWNNRVRSS) are enriched in low complexity. The segment covering 94–104 (QGSCSKKNQLP) has biased composition (polar residues). Residues 105-114 (RSSSSRSRSS) are compositionally biased toward low complexity. The 105-residue stretch at 137 to 241 (NHFVLVHGGS…KAVFLAAAML (105 aa)) folds into the AB hydrolase-1 domain. Catalysis depends on Asp-213, which acts as the Acyl-ester intermediate. Residues Asp-339 and His-367 each act as charge relay system in the active site.

This sequence belongs to the AB hydrolase superfamily. Methylesterase family.

It is found in the plastid. It localises to the chloroplast. Putative methylesterase. In Arabidopsis thaliana (Mouse-ear cress), this protein is Putative methylesterase 11, chloroplastic.